An 832-amino-acid chain; its full sequence is Protein P (832 aa).

A terminal protein domain (TP) region spans residues 1–177; sequence MPLSYQHFRK…FCGSPYSWEQ (177 aa). The segment at 178–335 is spacer; the sequence is ELQHGAESFH…YCLSHIVNLL (158 aa). Over residues 186-206 the composition is skewed to polar residues; sequence FHQQSSGILSRPSVGSSLQSK. Disordered regions lie at residues 186 to 255 and 280 to 305; these read FHQQ…GHNA and TSEN…RSQS. A compositionally biased stretch (low complexity) spans 210 to 220; the sequence is SRLGLQSQQGH. The tract at residues 336–679 is polymerase/reverse transcriptase domain (RT); it reads EDWGPCAEHG…YLNLYPVARQ (344 aa). Residues 346-589 enclose the Reverse transcriptase domain; it reads EHHIRIPRTP…YSLNFMGYVI (244 aa). Mg(2+) contacts are provided by aspartate 418, aspartate 540, and aspartate 541.

It belongs to the hepadnaviridae P protein family.

It carries out the reaction DNA(n) + a 2'-deoxyribonucleoside 5'-triphosphate = DNA(n+1) + diphosphate. The enzyme catalyses Endonucleolytic cleavage to 5'-phosphomonoester.. Activated by host HSP70 and HSP40 in vitro to be able to bind the epsilon loop of the pgRNA. Because deletion of the RNase H region renders the protein partly chaperone-independent, the chaperones may be needed indirectly to relieve occlusion of the RNA-binding site by this domain. Inhibited by several reverse-transcriptase inhibitors: Lamivudine, Adefovir and Entecavir. Multifunctional enzyme that converts the viral RNA genome into dsDNA in viral cytoplasmic capsids. This enzyme displays a DNA polymerase activity that can copy either DNA or RNA templates, and a ribonuclease H (RNase H) activity that cleaves the RNA strand of RNA-DNA heteroduplexes in a partially processive 3'- to 5'-endonucleasic mode. Neo-synthesized pregenomic RNA (pgRNA) are encapsidated together with the P protein, and reverse-transcribed inside the nucleocapsid. Initiation of reverse-transcription occurs first by binding the epsilon loop on the pgRNA genome, and is initiated by protein priming, thereby the 5'-end of (-)DNA is covalently linked to P protein. Partial (+)DNA is synthesized from the (-)DNA template and generates the relaxed circular DNA (RC-DNA) genome. After budding and infection, the RC-DNA migrates in the nucleus, and is converted into a plasmid-like covalently closed circular DNA (cccDNA). The activity of P protein does not seem to be necessary for cccDNA generation, and is presumably released from (+)DNA by host nuclear DNA repair machinery. This Hepatitis B virus genotype D subtype ayw (isolate Australia/AustKW/1991) (HBV-D) protein is Protein P.